We begin with the raw amino-acid sequence, 103 residues long: Co-chaperonin GroES (103 aa).

The protein belongs to the GroES chaperonin family. As to quaternary structure, heptamer of 7 subunits arranged in a ring. Interacts with the chaperonin GroEL.

It localises to the cytoplasm. Together with the chaperonin GroEL, plays an essential role in assisting protein folding. The GroEL-GroES system forms a nano-cage that allows encapsulation of the non-native substrate proteins and provides a physical environment optimized to promote and accelerate protein folding. GroES binds to the apical surface of the GroEL ring, thereby capping the opening of the GroEL channel. The polypeptide is Co-chaperonin GroES (Parasynechococcus marenigrum (strain WH8102)).